We begin with the raw amino-acid sequence, 276 residues long: Large ribosomal subunit protein uL2 (276 aa).

2 disordered regions span residues 14–58 (RNAS…GGGH) and 221–276 (TRGE…KNRK). Positions 16 to 27 (ASVSDFSELTRS) are enriched in polar residues. Residues 255–276 (RRPKKASNKMIVRRRPSGKNRK) show a composition bias toward basic residues.

Belongs to the universal ribosomal protein uL2 family. Part of the 50S ribosomal subunit. Forms a bridge to the 30S subunit in the 70S ribosome.

In terms of biological role, one of the primary rRNA binding proteins. Required for association of the 30S and 50S subunits to form the 70S ribosome, for tRNA binding and peptide bond formation. It has been suggested to have peptidyltransferase activity; this is somewhat controversial. Makes several contacts with the 16S rRNA in the 70S ribosome. The sequence is that of Large ribosomal subunit protein uL2 from Bifidobacterium longum subsp. infantis (strain ATCC 15697 / DSM 20088 / JCM 1222 / NCTC 11817 / S12).